The primary structure comprises 544 residues: Chaperonin GroEL (544 aa).

ATP is bound by residues 29–32 (TLGP), 86–90 (DGTTT), G413, 476–478 (NAA), and D492.

Belongs to the chaperonin (HSP60) family. Forms a cylinder of 14 subunits composed of two heptameric rings stacked back-to-back. Interacts with the co-chaperonin GroES.

It localises to the cytoplasm. It carries out the reaction ATP + H2O + a folded polypeptide = ADP + phosphate + an unfolded polypeptide.. Together with its co-chaperonin GroES, plays an essential role in assisting protein folding. The GroEL-GroES system forms a nano-cage that allows encapsulation of the non-native substrate proteins and provides a physical environment optimized to promote and accelerate protein folding. In Bacillus pumilus (strain SAFR-032), this protein is Chaperonin GroEL.